We begin with the raw amino-acid sequence, 46 residues long: GPSFCKANGKPCSYHADCCNCCLSGICKPSTNVILPGCSTSSFFRI.

2 positions are modified to 4-hydroxyproline: P2 and P11. 4 cysteine pairs are disulfide-bonded: C5/C19, C12/C22, C18/C27, and C21/C38. P29 carries the 4-hydroxyproline modification. The residue at position 44 (F44) is a D-phenylalanine.

Post-translationally, the natural D-Phe form of the peptide is more potent than the synthetic L-Phe form. As to expression, expressed by the venom duct.

Its subcellular location is the secreted. Functionally, iota-conotoxins bind to voltage-gated sodium channels (Nav) and act as agonists by shifting the voltage-dependence of activation to more hyperpolarized levels. Produces excitatory symptoms when injected intracranially into mice and is lethal at higher doses. Exposure to frog cutaneous pectoris induces spontaneous and repetitive action potentials. This effect is slowly reversible. Natural peptide (with D-Phe) is active on nerve, but not on muscle. Synthetic peptide (with L-Phe) is not active on both nerve and muscle. This Conus radiatus (Rayed cone) protein is Iota-conotoxin-like r11b.